The following is a 239-amino-acid chain: 3-dehydroquinate dehydratase (239 aa).

3-dehydroquinate is bound by residues 35-37 (ELR) and R70. H133 acts as the Proton donor/acceptor in catalysis. Residue K160 is the Schiff-base intermediate with substrate of the active site. 3-dehydroquinate contacts are provided by R202 and Q225.

This sequence belongs to the type-I 3-dehydroquinase family. Homodimer.

The enzyme catalyses 3-dehydroquinate = 3-dehydroshikimate + H2O. The protein operates within metabolic intermediate biosynthesis; chorismate biosynthesis; chorismate from D-erythrose 4-phosphate and phosphoenolpyruvate: step 3/7. Its function is as follows. Involved in the third step of the chorismate pathway, which leads to the biosynthesis of aromatic amino acids. Catalyzes the cis-dehydration of 3-dehydroquinate (DHQ) and introduces the first double bond of the aromatic ring to yield 3-dehydroshikimate. This chain is 3-dehydroquinate dehydratase, found in Staphylococcus saprophyticus subsp. saprophyticus (strain ATCC 15305 / DSM 20229 / NCIMB 8711 / NCTC 7292 / S-41).